The chain runs to 337 residues: MVDTHGQPLKLGYKASAEQFAPGKLADFAVQAEEQGLDSVWISDHFQPWRHVDGHAPSALVWLPWVAAKTSRVQLGTSVLTPTLRYNPAVIAQAFATLGCLAPGRAILGIGTGEALNETAVGVTFPETRERFARLREAVRLIKQLWSEERVTFEGEYYNLHDATVYDRPEQPVPIYVAAGGPGVTKYAGRAGDGYICTSGKGMDLYSETLLPALREGLEASGRTEGQIDRTIEIKLSFDEDPAQALENTRFWAPLSLTAEQKSSVHDPIEMARLADELPIEQVAKRWIVSSDPTEVAAAVQGYVDAGFTHLVFHAPGQDQSRFLTQFSADVVPLLRP.

D44 contacts coenzyme F420-(gamma-Glu)n. H45 (proton donor) is an active-site residue. Residues T81 and T112–G113 contribute to the coenzyme F420-(gamma-Glu)n site. The Proton acceptor role is filled by E114. Residues N117, G180–G181, and G183–V184 contribute to the coenzyme F420-(gamma-Glu)n site. Substrate contacts are provided by T198, K201, K262, and R286.

It belongs to the F420-dependent glucose-6-phosphate dehydrogenase family. Homodimer.

It carries out the reaction oxidized coenzyme F420-(gamma-L-Glu)(n) + D-glucose 6-phosphate + H(+) = 6-phospho-D-glucono-1,5-lactone + reduced coenzyme F420-(gamma-L-Glu)(n). Its function is as follows. Catalyzes the coenzyme F420-dependent oxidation of glucose 6-phosphate (G6P) to 6-phosphogluconolactone. The protein is F420-dependent glucose-6-phosphate dehydrogenase of Kineococcus radiotolerans (strain ATCC BAA-149 / DSM 14245 / SRS30216).